Here is a 231-residue protein sequence, read N- to C-terminus: Adenosylcobinamide-GDP ribazoletransferase (231 aa).

6 consecutive transmembrane segments (helical) span residues 29–49 (ICAYFTFVGYLAGVFYFSMKL), 53–73 (NFLWTLLSVALGFYLFDLFHF), 101–121 (IGPFAFFYAALYIVAYLYAFL), 126–146 (IDLIYVAVLGRFSMNILLHFG), 167–187 (LISLVFTIPLVYFPLNYIISL), and 211–231 (DVLGATCMFSQLSIMVALSLI).

The protein belongs to the CobS family. It depends on Mg(2+) as a cofactor.

The protein resides in the cell inner membrane. The catalysed reaction is alpha-ribazole + adenosylcob(III)inamide-GDP = adenosylcob(III)alamin + GMP + H(+). It carries out the reaction alpha-ribazole 5'-phosphate + adenosylcob(III)inamide-GDP = adenosylcob(III)alamin 5'-phosphate + GMP + H(+). It participates in cofactor biosynthesis; adenosylcobalamin biosynthesis; adenosylcobalamin from cob(II)yrinate a,c-diamide: step 7/7. Joins adenosylcobinamide-GDP and alpha-ribazole to generate adenosylcobalamin (Ado-cobalamin). Also synthesizes adenosylcobalamin 5'-phosphate from adenosylcobinamide-GDP and alpha-ribazole 5'-phosphate. The polypeptide is Adenosylcobinamide-GDP ribazoletransferase (Kosmotoga olearia (strain ATCC BAA-1733 / DSM 21960 / TBF 19.5.1)).